A 262-amino-acid chain; its full sequence is Transcription factor Adf-1 (262 aa).

The MADF DNA-binding region spans 24 to 104 (NLIEAVKLNP…QMQFLVDSIR (81 aa)). Residues 217–256 (SAEDQSFGMVVTDMLNTLGVRQKAEAKVHIIKYLTDMQLL) form the BESS domain.

O-glycosylated; contains N-acetylglucosamine side chains.

It localises to the nucleus. May play an important role not only in the regulation of Adh expression but also in the transcription of other genes. The polypeptide is Transcription factor Adf-1 (Adf1) (Drosophila melanogaster (Fruit fly)).